Reading from the N-terminus, the 778-residue chain is Aconitate hydratase, mitochondrial (778 aa).

Residues 1–16 constitute a mitochondrion transit peptide; the sequence is MLSARSAIKRPIVRGL. Residues glutamine 95 and 188 to 190 contribute to the substrate site; that span reads DSH. Residue cysteine 382 coordinates [4Fe-4S] cluster. Phosphoserine is present on serine 391. Threonine 409 bears the Phosphothreonine mark. [4Fe-4S] cluster-binding residues include cysteine 445 and cysteine 448. 2 residues coordinate substrate: arginine 471 and arginine 476. At serine 556 the chain carries Phosphoserine. Substrate-binding positions include arginine 604 and 667 to 668; that span reads SR.

It belongs to the aconitase/IPM isomerase family. In terms of assembly, monomer. Binds to mitochondrial DNA (mtDNA) and identified as component of mitochondrial nucleoids. The cofactor is [4Fe-4S] cluster.

The protein localises to the mitochondrion. It is found in the cytoplasm. It catalyses the reaction citrate = D-threo-isocitrate. It functions in the pathway carbohydrate metabolism; tricarboxylic acid cycle; isocitrate from oxaloacetate: step 2/2. Subject to catabolite regulation. Catalyzes the isomerization of citrate to isocitrate via cis-aconitate, a step in the citric acid cycle. Can also provide minor contributions to the reversible dehydration of (R)-homocitrate to cis-homoaconitate, a step in the alpha-aminoadipate pathway for lysine biosynthesis. Also plays an essential role in mtDNA maintenance. May directly protect mtDNA from accumulation of point mutations and ssDNA breaks as a component of mitochondrial nucleoids, or by preventing accumulation of iron citrate thereby alleviating its detrimental effects in mitochondria. This Saccharomyces cerevisiae (strain ATCC 204508 / S288c) (Baker's yeast) protein is Aconitate hydratase, mitochondrial.